Here is a 692-residue protein sequence, read N- to C-terminus: PTS system glucoside-specific EIICBA component (692 aa).

Positions 6-430 (KKFFGQLQRI…LNLKTPGRED (425 aa)) constitute a PTS EIIC type-1 domain. The next 10 helical transmembrane spans lie at 15–35 (IGKALMLPVAILPAAGILLTF), 84–104 (LGLAGGDGVAGIAALVGYLIM), 140–160 (LVLGIPTLQTGVFGGIIIGAL), 185–205 (FVPIITSLVAIVTGIVLSFVW), 215–235 (LSNFLLGKNLALTTFIFGIIE), 287–307 (AFTTGKYPFMMFGLPAAAFAI), 318–338 (VVGGLMLSAALTSFLTGITEP), 344–364 (LFVAPILYVAHVILAGTSFLI), 370–390 (VQIGMTFSGGFIDYILYGLLS), and 398–418 (LVIPVGIAYALIYYFLFTFLI). The PTS EIIB type-1 domain occupies 441–522 (SELPFEVLEA…QQIMDGKITS (82 aa)). Cys463 acts as the Phosphocysteine intermediate; for EIIB activity in catalysis. The 105-residue stretch at 563–667 (DKVFSAKMMG…DTITPIIITN (105 aa)) folds into the PTS EIIA type-1 domain. His615 functions as the Tele-phosphohistidine intermediate; for EIIA activity in the catalytic mechanism.

It is found in the cell membrane. Inhibited by methyl alpha-D-glucoside, methyl beta-D-glucoside, p-nitrophenyl alpha-D-glucoside, o-nitrophenyl beta-D-glucoside and salicin, but not by 2-deoxyglucose. Its function is as follows. The phosphoenolpyruvate-dependent sugar phosphotransferase system (sugar PTS), a major carbohydrate active -transport system, catalyzes the phosphorylation of incoming sugar substrates concomitantly with their translocation across the cell membrane. This system is involved in alpha- and beta-glucoside transport. Can also transport glucose, but not galactose, fructose, mannose, cellobiose, sucrose, maltose, lactose, melibiose and trehalose, as well as N-acetylglucosamine. This Staphylococcus carnosus (strain TM300) protein is PTS system glucoside-specific EIICBA component (glcB).